A 274-amino-acid polypeptide reads, in one-letter code: Rhamnulose-1-phosphate aldolase (274 aa).

E117 is a catalytic residue. The Zn(2+) site is built by H141, H143, and H212.

It belongs to the aldolase class II family. RhaD subfamily. In terms of assembly, homotetramer. The cofactor is Zn(2+).

It is found in the cytoplasm. The catalysed reaction is L-rhamnulose 1-phosphate = (S)-lactaldehyde + dihydroxyacetone phosphate. It participates in carbohydrate degradation; L-rhamnose degradation; glycerone phosphate from L-rhamnose: step 3/3. Functionally, catalyzes the reversible cleavage of L-rhamnulose-1-phosphate to dihydroxyacetone phosphate (DHAP) and L-lactaldehyde. The polypeptide is Rhamnulose-1-phosphate aldolase (Yersinia pestis).